We begin with the raw amino-acid sequence, 339 residues long: Phosphate acyltransferase (339 aa).

It belongs to the PlsX family. Homodimer. Probably interacts with PlsY.

It localises to the cytoplasm. The enzyme catalyses a fatty acyl-[ACP] + phosphate = an acyl phosphate + holo-[ACP]. The protein operates within lipid metabolism; phospholipid metabolism. Catalyzes the reversible formation of acyl-phosphate (acyl-PO(4)) from acyl-[acyl-carrier-protein] (acyl-ACP). This enzyme utilizes acyl-ACP as fatty acyl donor, but not acyl-CoA. The chain is Phosphate acyltransferase from Dechloromonas aromatica (strain RCB).